Consider the following 510-residue polypeptide: Conditioned medium factor receptor 1 (510 aa).

The Cytoplasmic portion of the chain corresponds to 1 to 36; sequence MDSKYIQKTLSAITEQITKNAAVQKVLDNKFVKEHK. A helical transmembrane segment spans residues 37-55; that stretch reads YAAAAATVGLGVVAATTIV. Topologically, residues 56–510 are extracellular; sequence KAVNCEGKRY…QGKKQIKKLD (455 aa).

Its subcellular location is the membrane. Functionally, receptor for cmfA, that appears to mediate the G-independent cmfA signal transduction. The chain is Conditioned medium factor receptor 1 (cmfB) from Dictyostelium discoideum (Social amoeba).